A 190-amino-acid polypeptide reads, in one-letter code: RNA-binding protein OPG065 (190 aa).

The region spanning 5 to 70 is the Z-binding domain; sequence YIDERSNAEI…DIPPRWFMTT (66 aa). A DRBM domain is found at 117–184; that stretch reads NPVTVINEYC…AKLAVDKLLG (68 aa).

Belongs to the orthopoxvirus OPG065 family. Interacts with host G1P2/ISG15. Interacts with host EIF2AK2/PKR. Interacts with host ZBP1.

RNA-binding protein that plays a role in the inhibition of multiple cellular antiviral responses activated by double-stranded RNA (dsRNA), such as inhibition of PKR activation, necroptosis, and IFN-mediated antiviral activities. Recognizes and binds Z-RNA structures via its Z-binding domain and dsRNA via its DRBM domain: RNA-binding activity is required to escape host ZBP1-dependent necroptosis. Mechanistically, the Z-binding domain binds Z-RNAs that are produced during vaccinia virus infection, thereby competing with Z-RNA detection by host ZBP1, suppressing ZBP1-dependent necroptosis. Acts as a key inhibitor of the interferon response by blocking the phosphorylation and subsequent activation of IRF3 and IRF7 kinases that are required for interferon-alpha gene expression. Inhibits NF-kappa-B activation and the ubiquitin-like protein ISG15, which is an early antiviral protein. The binding with host ISG15 subsequently blocks host ISGylation. The sequence is that of RNA-binding protein OPG065 (OPG065) from Vaccinia virus (strain Western Reserve) (VACV).